The sequence spans 210 residues: THAP domain-containing protein 1 (210 aa).

The segment at 5-57 (CSAYGCKNRYDKDKPVSFHKFPLTRPSLCKQWEAAVKRKNFKPTKYSSICSEH) adopts a THAP-type zinc-finger fold. The short motif at 131 to 134 (DHNY) is the HCFC1-binding motif (HBM) element. Positions 137–187 (EDTMHQRKRILQLEQQVEKLRKKLKTAQQRCRRQERQLEKLKEVVHFQREK) form a coiled coil.

The protein belongs to the THAP1 family. In terms of assembly, interacts with PAWR. Component of a THAP1/THAP3-HCFC1-OGT complex that contains, either THAP1 or THAP3, HCFC1 and OGT. Interacts with OGT. Interacts (via the HBM) with HCFC1 (via the Kelch-repeat domain); the interaction recruits HCFC1 to the RRM1 promoter. As to expression, highest levels in heart, liver and kidney. Lower levels in brain and lung.

Its subcellular location is the nucleus. The protein resides in the nucleoplasm. It is found in the PML body. Functionally, DNA-binding transcription regulator that regulates endothelial cell proliferation and G1/S cell-cycle progression. Specifically binds the 5'-[AT]NTNN[GT]GGCA[AGT]-3' core DNA sequence and acts by modulating expression of pRB-E2F cell-cycle target genes, including RRM1. Component of a THAP1/THAP3-HCFC1-OGT complex that is required for the regulation of the transcriptional activity of RRM1. May also have pro-apoptotic activity by potentiating both serum-withdrawal and TNF-induced apoptosis. This chain is THAP domain-containing protein 1 (Thap1), found in Mus musculus (Mouse).